The primary structure comprises 582 residues: Aspartate--tRNA(Asp/Asn) ligase (582 aa).

Glutamate 177 contacts L-aspartate. Residues 201-204 (QLFK) form an aspartate region. Arginine 223 contributes to the L-aspartate binding site. ATP-binding positions include 223 to 225 (RDE) and glutamine 232. Histidine 447 contacts L-aspartate. An ATP-binding site is contributed by glutamate 481. Arginine 488 is an L-aspartate binding site. Position 533 to 536 (533 to 536 (GLDR)) interacts with ATP.

The protein belongs to the class-II aminoacyl-tRNA synthetase family. Type 1 subfamily. Homodimer.

It is found in the cytoplasm. The catalysed reaction is tRNA(Asx) + L-aspartate + ATP = L-aspartyl-tRNA(Asx) + AMP + diphosphate. Aspartyl-tRNA synthetase with relaxed tRNA specificity since it is able to aspartylate not only its cognate tRNA(Asp) but also tRNA(Asn). Reaction proceeds in two steps: L-aspartate is first activated by ATP to form Asp-AMP and then transferred to the acceptor end of tRNA(Asp/Asn). The chain is Aspartate--tRNA(Asp/Asn) ligase from Chlamydia trachomatis serovar A (strain ATCC VR-571B / DSM 19440 / HAR-13).